We begin with the raw amino-acid sequence, 200 residues long: 3-isopropylmalate dehydratase small subunit (200 aa).

Belongs to the LeuD family. LeuD type 1 subfamily. As to quaternary structure, heterodimer of LeuC and LeuD.

The enzyme catalyses (2R,3S)-3-isopropylmalate = (2S)-2-isopropylmalate. The protein operates within amino-acid biosynthesis; L-leucine biosynthesis; L-leucine from 3-methyl-2-oxobutanoate: step 2/4. Its function is as follows. Catalyzes the isomerization between 2-isopropylmalate and 3-isopropylmalate, via the formation of 2-isopropylmaleate. The protein is 3-isopropylmalate dehydratase small subunit of Edwardsiella ictaluri (strain 93-146).